The chain runs to 399 residues: Flavohemoprotein (399 aa).

Residues 1-138 (MLDNKTIEII…IADAFIGIEK (138 aa)) enclose the Globin domain. Heme b is bound at residue His85. Residues Tyr95 and Glu137 each act as charge relay system in the active site. A reductase region spans residues 149–399 (GGWKEYKPFV…GPQLSLAQSV (251 aa)). The FAD-binding FR-type domain maps to 152–255 (KEYKPFVIAK…SAPAGDFVLD (104 aa)). FAD contacts are provided by residues Tyr190 and 206–209 (RQYS). 268–273 (GVGITP) is an NADP(+) binding site. 388–391 (LFGP) is a binding site for FAD.

This sequence belongs to the globin family. Two-domain flavohemoproteins subfamily. The protein in the C-terminal section; belongs to the flavoprotein pyridine nucleotide cytochrome reductase family. It depends on heme b as a cofactor. Requires FAD as cofactor.

It catalyses the reaction 2 nitric oxide + NADPH + 2 O2 = 2 nitrate + NADP(+) + H(+). The catalysed reaction is 2 nitric oxide + NADH + 2 O2 = 2 nitrate + NAD(+) + H(+). Is involved in NO detoxification in an aerobic process, termed nitric oxide dioxygenase (NOD) reaction that utilizes O(2) and NAD(P)H to convert NO to nitrate, which protects the bacterium from various noxious nitrogen compounds. Therefore, plays a central role in the inducible response to nitrosative stress. The protein is Flavohemoprotein (hmp) of Bacillus subtilis (strain 168).